Reading from the N-terminus, the 294-residue chain is MTKLKKVMISLVAATLLLLAGCGSSAVVKTDAGNVTQDELYEAMKTTYGNEVVQQLTFKKILEDKYTVTEKEVNAEYKKYEEQYGDSFESTLSSNNLTKTSFKENLEYNLLVQKATEANMNVSESKLKTYYKTWEPNITVRHILVDDEATAKEIQTKLKNGEKFADLAKEYSTDTATSTNGGLLDPFGPGEMDETFEKAAYALKNKDDVSGIVKSTYGYHLIQLVKKTEKGTYAKEKANVKAAYIKSQLTSENMTAALKKELKAANIDIKDSDLKDAFADYTSTSSSSSTSTSN.

Positions 1–21 are cleaved as a signal peptide; it reads MTKLKKVMISLVAATLLLLAG. A lipid anchor (N-palmitoyl cysteine) is attached at Cys-22. A lipid anchor (S-diacylglycerol cysteine) is attached at Cys-22. In terms of domain architecture, PpiC spans 135-226; sequence EPNITVRHIL…YGYHLIQLVK (92 aa).

The protein belongs to the PrsA family.

It is found in the cell membrane. It catalyses the reaction [protein]-peptidylproline (omega=180) = [protein]-peptidylproline (omega=0). Its function is as follows. Plays a major role in protein secretion by helping the post-translocational extracellular folding of several secreted proteins. The protein is Foldase protein PrsA 1 (prsA1) of Listeria innocua serovar 6a (strain ATCC BAA-680 / CLIP 11262).